Reading from the N-terminus, the 182-residue chain is ADP-ribosylation factor-like protein 3 (182 aa).

Glycine 2 carries N-myristoyl glycine lipidation. Serine 5 is subject to Phosphoserine. Residues 24–31, threonine 48, 67–71, glycine 70, 126–129, and 159–161 each bind GTP; these read GLDNAGKT, DIGGQ, NKQD, and SAL. Threonine 31 and threonine 48 together coordinate Mg(2+).

This sequence belongs to the small GTPase superfamily. Arf family. Found in a complex with ARL3, RP2 and UNC119 (or UNC119B); RP2 induces hydrolysis of GTP ARL3 in the complex, leading to the release of UNC119 (or UNC119B). Interacts with RP2; interaction is direct and stimulated with the activated GTP-bound form of ARL3. Interacts with SYS1. Interacts with ARL2BP; the GTP-bound form interacts with ARL2BP. Microtubule-associated protein. Does not interact with TBCC. Interacts with RP2. Interacts with PDE6D; the interaction occurs specifically with the GTP-bound form of ARL3. Interacts with GGA1; the interaction recruits PKD1:PKD2 complex to trans-Golgi network and is required for ciliary targeting of PKD1:PKD2 complex. Interacts with DNAAF9.

It localises to the golgi apparatus membrane. The protein localises to the cytoplasm. It is found in the cytoskeleton. The protein resides in the spindle. Its subcellular location is the nucleus. It localises to the microtubule organizing center. The protein localises to the centrosome. It is found in the cell projection. The protein resides in the cilium. Small GTP-binding protein which cycles between an inactive GDP-bound and an active GTP-bound form, and the rate of cycling is regulated by guanine nucleotide exchange factors (GEF) and GTPase-activating proteins (GAP). Required for normal cytokinesis and cilia signaling. Required for targeting proteins to the cilium, including myristoylated NPHP3 and prenylated INPP5E. Targets NPHP3 to the ciliary membrane by releasing myristoylated NPHP3 from UNC119B cargo adapter into the cilium. Requires assistance from GTPase-activating proteins (GAPs) like RP2 and PDE6D, in order to cycle between inactive GDP-bound and active GTP-bound forms. Required for PKD1:PKD2 complex targeting from the trans-Golgi network to the cilium. This is ADP-ribosylation factor-like protein 3 from Mus musculus (Mouse).